Consider the following 191-residue polypeptide: uncharacterized protein (191 aa).

5 helical membrane-spanning segments follow: residues 24–44 (IVRG…GASG), 51–71 (IIAA…LGAF), 114–134 (LIDG…FFLF), 139–159 (ALYV…VFIG), and 167–187 (IISG…CFMI).

Its subcellular location is the cell membrane. This is an uncharacterized protein from Methanocaldococcus jannaschii (strain ATCC 43067 / DSM 2661 / JAL-1 / JCM 10045 / NBRC 100440) (Methanococcus jannaschii).